A 252-amino-acid chain; its full sequence is MSGHSKWANIKNRKAKVDEKRGRLFTKIGREIIIAARMGGGDPEGNMRLKAAIAKAKAANMPNENIQRAIMRGTGELEGAAYEEMTYEGYGPGGVAMLLNIATDNRNRTASEIRYIFSRGGGNLGESGCVAWMFNPKGVITVEVPAGDKREEVILQAIEAGAEDVDDEDDEVLEIKTAPGDLEAVREALEASGVTITHAEVEMVPQTTVTIDDPETAGKVMRLIERLEDHDDVQAVYTNADIPAAIMDQLDI.

Belongs to the TACO1 family.

Its subcellular location is the cytoplasm. In Moorella thermoacetica (strain ATCC 39073 / JCM 9320), this protein is Probable transcriptional regulatory protein Moth_1704.